The sequence spans 193 residues: AP-3 complex subunit sigma-1 (193 aa).

Serine 191 is subject to Phosphoserine.

The protein belongs to the adaptor complexes small subunit family. As to quaternary structure, adaptor protein complex 3 (AP-3) is a heterotetramer composed of two large adaptins (delta-type subunit AP3D1 and beta-type subunit AP3B1 or AP3B2), a medium adaptin (mu-type subunit AP3M1 or AP3M2) and a small adaptin (sigma-type subunit APS1 or AP3S2). Interacts with AGAP1. AP-3 associates with the BLOC-1 complex.

It is found in the golgi apparatus. Its subcellular location is the cytoplasmic vesicle membrane. Its function is as follows. Part of the AP-3 complex, an adaptor-related complex which is not clathrin-associated. The complex is associated with the Golgi region as well as more peripheral structures. It facilitates the budding of vesicles from the Golgi membrane and may be directly involved in trafficking to lysosomes. In concert with the BLOC-1 complex, AP-3 is required to target cargos into vesicles assembled at cell bodies for delivery into neurites and nerve terminals. The protein is AP-3 complex subunit sigma-1 (AP3S1) of Bos taurus (Bovine).